Consider the following 63-residue polypeptide: Race-specific elicitor A9 (63 aa).

An N-terminal signal peptide occupies residues 1 to 23 (MKLSLLSVELALLIATTLPLCWA). Residues 24-35 (AALPVGLGVGLD) constitute a propeptide that is removed on maturation. 3 cysteine pairs are disulfide-bonded: Cys37/Cys51, Cys41/Cys54, and Cys47/Cys61.

In terms of biological role, this necrosis-inducing peptide induces a hypersensitive response on Cf-9 tomato genotypes. Race-specific elicitors are compounds which only induce defense responses in genotypes of host plants which are resistant to the pathogenic race that produces the elicitor, but not in susceptible genotypes. In Passalora fulva (Tomato leaf mold), this protein is Race-specific elicitor A9 (AVR9).